Reading from the N-terminus, the 735-residue chain is ATP-dependent RNA helicase dbp4 (735 aa).

The disordered stretch occupies residues methionine 1–isoleucine 24. Residues arginine 8–glutamate 19 show a composition bias toward basic and acidic residues. The short motif at aspartate 39–lysine 67 is the Q motif element. One can recognise a Helicase ATP-binding domain in the interval isoleucine 70–isoleucine 244. Alanine 83–threonine 90 is a binding site for ATP. Positions aspartate 192–aspartate 195 match the DEAD box motif. A Helicase C-terminal domain is found at lysine 270–leucine 424. Positions glycine 483–asparagine 513 are disordered. Phosphoserine is present on residues serine 500, serine 503, serine 504, and serine 545. The segment at lysine 652–isoleucine 712 is disordered. Residues glutamate 692–glycine 711 show a composition bias toward basic and acidic residues.

This sequence belongs to the DEAD box helicase family. DDX10/DBP4 subfamily. As to quaternary structure, interacts with the U3 and U14 snoRNAs. Associates with pre-ribosomal complexes.

Its subcellular location is the nucleus. The protein localises to the nucleolus. The catalysed reaction is ATP + H2O = ADP + phosphate + H(+). ATP-dependent RNA helicase required for ribosome biogenesis. Involved in the release of U14 snoRNA in pre-ribosomal complexes. Required for pre-rRNA cleavage at site A2. The chain is ATP-dependent RNA helicase dbp4 (dbp4) from Schizosaccharomyces pombe (strain 972 / ATCC 24843) (Fission yeast).